A 191-amino-acid polypeptide reads, in one-letter code: Holliday junction branch migration complex subunit RuvA (191 aa).

Positions 1–64 are domain I; the sequence is MIGRLSGVLL…EDAHILFGFG (64 aa). The segment at 65–137 is domain II; the sequence is TNEERNVFKQ…LKGKLGADLG (73 aa). Residues 137–141 are flexible linker; the sequence is GVAGA. Residues 142 to 191 form a domain III region; it reads VATDATSDILNALLALGYSDKEAMLALKQVPAGTGVSDGIKLALKSLSKA.

This sequence belongs to the RuvA family. Homotetramer. Forms an RuvA(8)-RuvB(12)-Holliday junction (HJ) complex. HJ DNA is sandwiched between 2 RuvA tetramers; dsDNA enters through RuvA and exits via RuvB. An RuvB hexamer assembles on each DNA strand where it exits the tetramer. Each RuvB hexamer is contacted by two RuvA subunits (via domain III) on 2 adjacent RuvB subunits; this complex drives branch migration. In the full resolvosome a probable DNA-RuvA(4)-RuvB(12)-RuvC(2) complex forms which resolves the HJ.

Its subcellular location is the cytoplasm. Functionally, the RuvA-RuvB-RuvC complex processes Holliday junction (HJ) DNA during genetic recombination and DNA repair, while the RuvA-RuvB complex plays an important role in the rescue of blocked DNA replication forks via replication fork reversal (RFR). RuvA specifically binds to HJ cruciform DNA, conferring on it an open structure. The RuvB hexamer acts as an ATP-dependent pump, pulling dsDNA into and through the RuvAB complex. HJ branch migration allows RuvC to scan DNA until it finds its consensus sequence, where it cleaves and resolves the cruciform DNA. The protein is Holliday junction branch migration complex subunit RuvA of Janthinobacterium sp. (strain Marseille) (Minibacterium massiliensis).